The primary structure comprises 414 residues: Glyceraldehyde-3-phosphate dehydrogenase, chloroplastic (414 aa).

A chloroplast-targeting transit peptide spans 1-76 (MAFVAPVATV…GIVAATFGPT (76 aa)). NADP(+) is bound by residues 88–89 (RI), D112, and R156. D-glyceraldehyde 3-phosphate-binding positions include 230–232 (SCT), T261, R276, 289–290 (TG), and R312. The Nucleophile role is filled by C231. N394 contributes to the NADP(+) binding site.

This sequence belongs to the glyceraldehyde-3-phosphate dehydrogenase family. Homotetramer.

The protein resides in the plastid. Its subcellular location is the chloroplast. It catalyses the reaction D-glyceraldehyde 3-phosphate + phosphate + NADP(+) = (2R)-3-phospho-glyceroyl phosphate + NADPH + H(+). Its pathway is carbohydrate biosynthesis; Calvin cycle. The chain is Glyceraldehyde-3-phosphate dehydrogenase, chloroplastic (GAPA) from Chondrus crispus (Carrageen Irish moss).